Consider the following 118-residue polypeptide: Small ribosomal subunit protein bS6 (118 aa).

It belongs to the bacterial ribosomal protein bS6 family.

Functionally, binds together with bS18 to 16S ribosomal RNA. The protein is Small ribosomal subunit protein bS6 of Orientia tsutsugamushi (strain Ikeda) (Rickettsia tsutsugamushi).